The primary structure comprises 183 residues: Dual-action ribosomal maturation protein DarP (183 aa).

This sequence belongs to the DarP family.

Its subcellular location is the cytoplasm. Its function is as follows. Member of a network of 50S ribosomal subunit biogenesis factors which assembles along the 30S-50S interface, preventing incorrect 23S rRNA structures from forming. Promotes peptidyl transferase center (PTC) maturation. The polypeptide is Dual-action ribosomal maturation protein DarP (Shigella flexneri).